The chain runs to 333 residues: Probable xyloglucan endotransglucosylase/hydrolase protein 27 (333 aa).

The first 20 residues, 1–20 (METLSRLLVFMSLFSGLVSG), serve as a signal peptide directing secretion. In terms of domain architecture, GH16 spans 21–223 (FALQNLPITS…YKYAPYIARF (203 aa)). E108 acts as the Nucleophile in catalysis. The active-site Proton donor is the E112. Xyloglucan-binding positions include E112 and 125–127 (QTN). The N-linked (GlcNAc...) asparagine glycan is linked to N131. Xyloglucan is bound by residues 135 to 139 (HSGRE), 202 to 203 (KW), G207, and R282. C277 and C290 are joined by a disulfide. The segment at 311 to 333 (IPRRHRNGKHRSKRSRVDGTESI) is disordered. Basic residues predominate over residues 312–324 (PRRHRNGKHRSKR).

This sequence belongs to the glycosyl hydrolase 16 family. XTH group 3 subfamily. Contains at least one intrachain disulfide bond essential for its enzymatic activity. In terms of tissue distribution, expressed in 7 day old seedlings, roots, hypocotyls, rosette leaves, internodes between nodes bearing axillary shoots, nodes bearing flowers, flower buds, anthers and siliques.

The protein resides in the secreted. The protein localises to the cell wall. It is found in the extracellular space. It localises to the apoplast. It carries out the reaction breaks a beta-(1-&gt;4) bond in the backbone of a xyloglucan and transfers the xyloglucanyl segment on to O-4 of the non-reducing terminal glucose residue of an acceptor, which can be a xyloglucan or an oligosaccharide of xyloglucan.. In terms of biological role, catalyzes xyloglucan endohydrolysis (XEH) and/or endotransglycosylation (XET). Cleaves and religates xyloglucan polymers, an essential constituent of the primary cell wall, and thereby participates in cell wall construction of growing tissues. Required for cell wall modification during the development of tracheary elements. This chain is Probable xyloglucan endotransglucosylase/hydrolase protein 27 (XTH27), found in Arabidopsis thaliana (Mouse-ear cress).